The chain runs to 164 residues: UPF0114 protein YqhA (164 aa).

A run of 3 helical transmembrane segments spans residues 15-35 (LLAPVYFGLSLALIALALKFF), 53-73 (LILVLLSLVDMTLVGGLLVMV), and 136-156 (LMWYVIIHLTFVLSAFVMGYL).

Belongs to the UPF0114 family.

The protein resides in the cell membrane. The chain is UPF0114 protein YqhA from Escherichia coli O6:H1 (strain CFT073 / ATCC 700928 / UPEC).